A 364-amino-acid chain; its full sequence is Fructose-bisphosphate aldolase A (364 aa).

At tyrosine 5 the chain carries Phosphotyrosine. Threonine 9 is subject to Phosphothreonine. Phosphoserine occurs at positions 36 and 39. Lysine 42 carries the post-translational modification N6-acetyllysine; alternate. A Glycyl lysine isopeptide (Lys-Gly) (interchain with G-Cter in SUMO1); alternate cross-link involves residue lysine 42. Lysine 42 participates in a covalent cross-link: Glycyl lysine isopeptide (Lys-Gly) (interchain with G-Cter in SUMO2); alternate. Residue arginine 43 participates in beta-D-fructose 1,6-bisphosphate binding. Serine 46 carries the post-translational modification Phosphoserine. An N6-(2-hydroxyisobutyryl)lysine modification is found at lysine 99. An N6-acetyllysine modification is found at lysine 108. An N6-acetyllysine; alternate modification is found at lysine 111. The residue at position 111 (lysine 111) is an N6-malonyllysine; alternate. Position 132 is a phosphoserine (serine 132). N6-(2-hydroxyisobutyryl)lysine is present on lysine 147. Catalysis depends on glutamate 188, which acts as the Proton acceptor. The Schiff-base intermediate with dihydroxyacetone-P role is filled by lysine 230. The residue at position 272 (serine 272) is a Phosphoserine. Beta-D-fructose 1,6-bisphosphate contacts are provided by residues 272-274, serine 301, and arginine 304; that span reads SGG. The residue at position 312 (lysine 312) is an N6-malonyllysine. Lysine 330 bears the N6-acetyllysine mark.

Belongs to the class I fructose-bisphosphate aldolase family. As to quaternary structure, homotetramer. Interacts with SNX9 and WAS. Interacts with FBP2; the interaction blocks FBP2 inhibition by physiological concentrations of AMP and reduces inhibition by Ca(2+).

The protein resides in the cytoplasm. It localises to the myofibril. Its subcellular location is the sarcomere. The protein localises to the i band. It is found in the m line. It carries out the reaction beta-D-fructose 1,6-bisphosphate = D-glyceraldehyde 3-phosphate + dihydroxyacetone phosphate. Its pathway is carbohydrate degradation; glycolysis; D-glyceraldehyde 3-phosphate and glycerone phosphate from D-glucose: step 4/4. Catalyzes the reversible conversion of beta-D-fructose 1,6-bisphosphate (FBP) into two triose phosphate and plays a key role in glycolysis and gluconeogenesis. In addition, may also function as scaffolding protein. The chain is Fructose-bisphosphate aldolase A (Aldoa) from Mus musculus (Mouse).